The chain runs to 321 residues: Large ribosomal subunit protein uL3 (321 aa).

It belongs to the universal ribosomal protein uL3 family. As to quaternary structure, part of the 50S ribosomal subunit. Forms a cluster with proteins L14 and L24e.

Its function is as follows. One of the primary rRNA binding proteins, it binds directly near the 3'-end of the 23S rRNA, where it nucleates assembly of the 50S subunit. The chain is Large ribosomal subunit protein uL3 from Nanoarchaeum equitans (strain Kin4-M).